Reading from the N-terminus, the 384-residue chain is Sphingosine 1-phosphate receptor 4 (384 aa).

At 1–50 (MNATGTPVAPESCQQLAAGGHSRLIVLHYNHSGRLAGRGGPEDGGLGALR) the chain is on the extracellular side. N-linked (GlcNAc...) asparagine glycans are attached at residues N2 and N30. Residues 51–71 (GLSVAASCLVVLENLLVLAAI) traverse the membrane as a helical segment. At 72–84 (TSHMRSRRWVYYC) the chain is on the cytoplasmic side. The helical transmembrane segment at 85–105 (LVNITLSDLLTGAAYLANVLL) threads the bilayer. Residues 106–117 (SGARTFRLAPAQ) lie on the Extracellular side of the membrane. A helical membrane pass occupies residues 118–138 (WFLREGLLFTALAASTFSLLF). At 139-161 (TAGERFATMVRPVAESGATKTSR) the chain is on the cytoplasmic side. Residues 162–182 (VYGFIGLCWLLAALLGMLPLL) form a helical membrane-spanning segment. The Extracellular segment spans residues 183–206 (GWNCLCAFDRCSSLLPLYSKRYIL). The chain crosses the membrane as a helical span at residues 207–227 (FCLVIFAGVLATIMGLYGAIF). At 228-252 (RLVQASGQKAPRPAARRKARRLLKT) the chain is on the cytoplasmic side. A helical membrane pass occupies residues 253–273 (VLMILLAFLVCWGPLFGLLLA). At 274–288 (DVFGSNLWAQEYLRG) the chain is on the extracellular side. A helical transmembrane segment spans residues 289–309 (MDWILALAVLNSAVNPIIYSF). Residues 310–384 (RSREVCRAVL…LSSISSVRSI (75 aa)) lie on the Cytoplasmic side of the membrane. C323 is lipidated: S-palmitoyl cysteine.

This sequence belongs to the G-protein coupled receptor 1 family. As to expression, specifically expressed in fetal and adult lymphoid and hematopoietic tissue as well as in lung. Considerable level of expression in adult and fetal spleen as well as adult peripheral leukocytes and lung. Lower expression in adult thymus, lymph node, bone marrow, and appendix as well as in fetal liver, thymus, and lung.

It is found in the cell membrane. Receptor for the lysosphingolipid sphingosine 1-phosphate (S1P). S1P is a bioactive lysophospholipid that elicits diverse physiological effect on most types of cells and tissues. May be involved in cell migration processes that are specific for lymphocytes. This Homo sapiens (Human) protein is Sphingosine 1-phosphate receptor 4 (S1PR4).